Here is a 632-residue protein sequence, read N- to C-terminus: Deoxynucleoside triphosphate triphosphohydrolase SAMHD1 (632 aa).

The disordered stretch occupies residues 1–22 (MKGINGAKRVRHDASPSAQDGY). One can recognise an SAM domain in the interval 44-107 (WDVEEVCLFL…LSCLRMLCQN (64 aa)). 2 residues coordinate GTP: Lys113 and Val114. Residue Asn116 participates in dGTP binding. Asp134, Gln139, and Arg142 together coordinate GTP. DGTP-binding residues include Gln146, Leu147, Val153, and Arg161. Gln146 lines the dATP pocket. Gln146 contacts dCTP. Gln146 provides a ligand contact to dTTP. Residue Arg161 coordinates dATP. Residue Arg161 coordinates dCTP. Arg161 is a binding site for dTTP. An HD domain is found at 161–321 (RFEHSIGVGY…GIDVDKWDYF (161 aa)). Positions 164, 203, and 204 each coordinate Mn(2+). 2 residues coordinate dATP: His207 and His212. DCTP is bound by residues His207 and His212. Residues His207 and His212 each contribute to the dTTP site. Residue His230 is part of the active site. Asp316 lines the Mn(2+) pocket. DGTP-binding residues include Lys317, Tyr320, Asp324, Arg338, Arg357, Lys359, Asn363, Arg371, Tyr379, Gln380, His381, and Lys382. Residues Lys317, Tyr320, and Asp324 each contribute to the dATP site. Lys317, Tyr320, and Asp324 together coordinate dCTP. Lys317, Tyr320, and Asp324 together coordinate dTTP. Residue Arg371 coordinates dATP. Arg371 contributes to the dCTP binding site. Residue Gln380 participates in dATP binding. A dCTP-binding site is contributed by Gln380. DTTP is bound at residue Gln380. Residues Arg456, Lys460, and Lys529 each contribute to the GTP site. Lys529 is a dGTP binding site.

Belongs to the SAMHD1 family. Homodimer; in absence of GTP and dNTP. Homotetramer; in GTP- and dNTP-bound form. Interacts with rbbp8/CtIP. The cofactor is Zn(2+).

The protein resides in the nucleus. Its subcellular location is the chromosome. The enzyme catalyses a 2'-deoxyribonucleoside 5'-triphosphate + H2O = a 2'-deoxyribonucleoside + triphosphate + H(+). It catalyses the reaction dATP + H2O = 2'-deoxyadenosine + triphosphate + H(+). The catalysed reaction is dCTP + H2O = 2'-deoxycytidine + triphosphate + H(+). It carries out the reaction dGTP + H2O = 2'-deoxyguanosine + triphosphate + H(+). The enzyme catalyses dTTP + H2O = thymidine + triphosphate + H(+). Allosterically activated and regulated via the combined actions of GTP and dNTPs (dATP, dGTP, dTTP and dCTP): Allosteric site 1 binds GTP, while allosteric site 2 binds dNTP. Allosteric activation promotes the formation of highly active homotetramers. Functionally, protein that acts both as a host restriction factor involved in defense response to virus and as a regulator of DNA end resection at stalled replication forks. Has deoxynucleoside triphosphate (dNTPase) activity, which is required to restrict infection by viruses: dNTPase activity reduces cellular dNTP levels to levels too low for retroviral reverse transcription to occur, blocking early-stage virus replication in dendritic and other myeloid cells. Functions during S phase at stalled DNA replication forks to promote the resection of gapped or reversed forks: acts by stimulating the exonuclease activity of mre11, activating the ATR-CHK1 pathway and allowing the forks to restart replication. Ability to promote DNA end resection at stalled replication forks is independent of dNTPase activity. This Xenopus laevis (African clawed frog) protein is Deoxynucleoside triphosphate triphosphohydrolase SAMHD1.